A 407-amino-acid polypeptide reads, in one-letter code: Protoasukamycin 4-monooxygenase (407 aa).

As to quaternary structure, does not interact with AsuE2, suggesting a possible transient interaction between the two enzymes instead of formation of a stable complex. FMN is required as a cofactor. FAD serves as cofactor. The cofactor is riboflavin.

The enzyme catalyses protoasukamycin + NADH + O2 + H(+) = 4-hydroxyprotoasukamycin + NAD(+) + H2O. It functions in the pathway antibiotic biosynthesis. Its activity is regulated as follows. When flavin concentration is low, activity is enhanced by the presence of the NADH-dependent flavin reductase AsuE2. In the presence of abundant flavin, activity of AsuE1 is not affected by AsuE2. Its function is as follows. Involved in the biosynthesis of the antibiotic asukamycin. Catalyzes the conversion of protoasukamycin to 4-hydroxyprotoasukamycin. Can also convert some protoasukamycin derivatives into their corresponding 4-hydroxyprotoasukamycin derivatives. Can also use NADPH, but catalytic efficiency is 50-fold higher with NADH. This chain is Protoasukamycin 4-monooxygenase, found in Streptomyces nodosus subsp. asukaensis.